Here is a 216-residue protein sequence, read N- to C-terminus: MFLFDTLSKKTTMPTEETALPGREEALAVPETHFVNGRPLKGPYPDGLEIIYLGMGCFWGAERLFWKTPGVWVTAVGYAGGFTRNPTYHETTTGQTGHAEVVKVVYDPAVISLSGLLKIFFEEHDPTQGMRQGNDVGTTYRSAIYATTEGQLQQAQKARDAFQQALDEAGHGHAITTEIGPLETFYYAEDYHQQYLAKNPGGYCGLRGTGVSCNIG.

Cys57 is an active-site residue.

The protein belongs to the MsrA Met sulfoxide reductase family.

It carries out the reaction L-methionyl-[protein] + [thioredoxin]-disulfide + H2O = L-methionyl-(S)-S-oxide-[protein] + [thioredoxin]-dithiol. The enzyme catalyses [thioredoxin]-disulfide + L-methionine + H2O = L-methionine (S)-S-oxide + [thioredoxin]-dithiol. Has an important function as a repair enzyme for proteins that have been inactivated by oxidation. Catalyzes the reversible oxidation-reduction of methionine sulfoxide in proteins to methionine. The polypeptide is Peptide methionine sulfoxide reductase MsrA (Agrobacterium fabrum (strain C58 / ATCC 33970) (Agrobacterium tumefaciens (strain C58))).